A 337-amino-acid chain; its full sequence is GTP 3',8-cyclase (337 aa).

One can recognise a Radical SAM core domain in the interval Thr17–Ala242. Arg26 lines the GTP pocket. Positions 33 and 37 each coordinate [4Fe-4S] cluster. S-adenosyl-L-methionine is bound at residue Tyr39. Cys40 is a [4Fe-4S] cluster binding site. GTP is bound at residue Arg76. Gly80 contacts S-adenosyl-L-methionine. Residue Thr107 participates in GTP binding. Ser131 is a binding site for S-adenosyl-L-methionine. Lys168 lines the GTP pocket. Met202 provides a ligand contact to S-adenosyl-L-methionine. [4Fe-4S] cluster contacts are provided by Cys265 and Cys268. Residue Arg270 to Arg272 participates in GTP binding. Cys282 is a [4Fe-4S] cluster binding site.

Belongs to the radical SAM superfamily. MoaA family. In terms of assembly, monomer and homodimer. [4Fe-4S] cluster serves as cofactor.

It catalyses the reaction GTP + AH2 + S-adenosyl-L-methionine = (8S)-3',8-cyclo-7,8-dihydroguanosine 5'-triphosphate + 5'-deoxyadenosine + L-methionine + A + H(+). It functions in the pathway cofactor biosynthesis; molybdopterin biosynthesis. Its function is as follows. Catalyzes the cyclization of GTP to (8S)-3',8-cyclo-7,8-dihydroguanosine 5'-triphosphate. The sequence is that of GTP 3',8-cyclase from Mannheimia succiniciproducens (strain KCTC 0769BP / MBEL55E).